Here is a 1001-residue protein sequence, read N- to C-terminus: Sarcoplasmic/endoplasmic reticulum calcium ATPase 1 (1001 aa).

4 helical membrane passes run 49 to 69 (LWELVIEQFEDLLVRILLLAA), 90 to 110 (EPFVILLILIANAIVGVWQER), 254 to 273 (DEFGEQLSKVISLICVAVWL), and 296 to 313 (FKIAVALAVAAIPEGLPA). 4 residues coordinate Ca(2+): Val304, Ala305, Ile307, and Glu309. The 4-aspartylphosphate intermediate role is filled by Asp351. Asp351 and Thr353 together coordinate Mg(2+). Residue Thr353 participates in ATP binding. Thr441 carries the phosphothreonine modification. ATP contacts are provided by Glu442, Arg489, Lys515, and Arg560. Thr569 bears the Phosphothreonine mark. Ser581 carries the phosphoserine modification. ATP contacts are provided by Thr625, Gly626, Asp627, Arg678, and Lys684. Residue Asp703 coordinates Mg(2+). Asn706 lines the ATP pocket. A run of 3 helical transmembrane segments spans residues 758–777 (KQFIRYLISSNVGEVVCIFL), 788–808 (IPVQLLWVNLVTDGLPATALG), and 829–851 (ISGWLFFRYMAIGGYVGAATVGA). Residues Asn768, Glu771, Asn796, Thr799, and Asp800 each coordinate Ca(2+). The interaction with PLN stretch occupies residues 788 to 808 (IPVQLLWVNLVTDGLPATALG). Cys876 and Cys888 are joined by a disulfide. A run of 3 helical transmembrane segments spans residues 898–917 (TMALSVLVTIEMCNALNSLS), 931–949 (IWLLGSICLSMSLHFLILY), and 965–985 (TQWLMVLKISLPVIGLDEILK). Position 908 (Glu908) interacts with Ca(2+). The interval 932–943 (WLLGSICLSMSL) is interaction with PLN.

The protein belongs to the cation transport ATPase (P-type) (TC 3.A.3) family. Type IIA subfamily. As to quaternary structure, interacts with sarcolipin (SLN). Interacts with phospholamban (PLN). Interacts with myoregulin (MRLN). Interacts with DWORF. Interacts with VMP1. Mg(2+) serves as cofactor. In terms of tissue distribution, skeletal muscle, fast twitch muscle (type II) fibers.

It is found in the endoplasmic reticulum membrane. Its subcellular location is the sarcoplasmic reticulum membrane. The enzyme catalyses Ca(2+)(in) + ATP + H2O = Ca(2+)(out) + ADP + phosphate + H(+). Inhibited by sarcolipin (SLN) and myoregulin (MRLN). Has also been shown to be reversibly inhibited by phospholamban (PLN) at low calcium concentrations in vitro. Dephosphorylated PLN decreases the apparent affinity of the ATPase for calcium and this inhibition is regulated by the phosphorylation of PLN in vitro. Enhanced by DWORF; DWORF increases activity by displacing sarcolipin (SLN), phospholamban (PLN) and myoregulin (MRLN). In terms of biological role, key regulator of striated muscle performance by acting as the major Ca(2+) ATPase responsible for the reuptake of cytosolic Ca(2+) into the sarcoplasmic reticulum. Catalyzes the hydrolysis of ATP coupled with the translocation of calcium from the cytosol to the sarcoplasmic reticulum lumen. Contributes to calcium sequestration involved in muscular excitation/contraction. The sequence is that of Sarcoplasmic/endoplasmic reticulum calcium ATPase 1 from Homo sapiens (Human).